We begin with the raw amino-acid sequence, 856 residues long: Genome polyprotein (856 aa).

The region spanning 141-284 is the Peptidase S30 domain; it reads KLTESQMNHL…QGVLNSMVQF (144 aa). Residues histidine 192, aspartate 201, and serine 235 each act as for P1 proteinase activity in the active site. The Involved in virions binding and aphid transmission signature appears at 592–594; the sequence is PTK. One can recognise a Peptidase C6 domain in the interval 618–740; the sequence is LYIAKQGYCY…ESEIKHYRVG (123 aa). Active-site for helper component proteinase activity residues include cysteine 626 and histidine 699.

It belongs to the potyviridae genome polyprotein family. Post-translationally, genome polyprotein of potyviruses undergoes post-translational proteolytic processing by the main proteinase NIa-pro resulting in the production of at least ten individual proteins. The P1 proteinase and the HC-pro cleave only their respective C-termini autocatalytically. 6K1 is essential for proper proteolytic separation of P3 from CI.

The enzyme catalyses Hydrolyzes a Gly-|-Gly bond at its own C-terminus, commonly in the sequence -Tyr-Xaa-Val-Gly-|-Gly, in the processing of the potyviral polyprotein.. Required for aphid transmission and also has proteolytic activity. Only cleaves a Gly-Gly dipeptide at its own C-terminus. Interacts with virions and aphid stylets. Acts as a suppressor of RNA-mediated gene silencing, also known as post-transcriptional gene silencing (PTGS), a mechanism of plant viral defense that limits the accumulation of viral RNAs. May have RNA-binding activity. The polypeptide is Genome polyprotein (Potato virus Y (strain C) (PVY)).